The sequence spans 590 residues: Shugoshin (590 aa).

Residues 1-20 (MPKRKIAPNKESSRRTVSHD) form a disordered region. The segment covering 11 to 20 (ESSRRTVSHD) has biased composition (basic and acidic residues). A coiled-coil region spans residues 25 to 86 (QIQEFQNLMD…QENVTLRSKT (62 aa)). 3 disordered regions span residues 133-235 (LRTM…QVEE), 291-337 (PSNP…HSMK), and 411-550 (RNRE…NSNI). A compositionally biased stretch (basic and acidic residues) spans 173 to 185 (SFNKDDGPDLEPK). The segment covering 302–326 (PSATLPTTTSDASTVYPSSSSSTNS) has biased composition (low complexity). Basic residues predominate over residues 328 to 337 (PKTKIKHSMK). The span at 448-459 (KKTEDEIHEDTA) shows a compositional bias: basic and acidic residues. A compositionally biased stretch (polar residues) spans 513–526 (IVNNLSDENSTTRP). Positions 527-550 (SKSSKGTSNNNNNYNNFDNNNSNI) are enriched in low complexity.

It belongs to the shugoshin family. In terms of processing, ubiquitinated by the anaphase promoting complex (APC) at the onset of anaphase, conducting to its degradation.

It is found in the chromosome. Its subcellular location is the centromere. The protein localises to the kinetochore. It localises to the cytoplasm. The protein resides in the cytoskeleton. It is found in the spindle pole. In terms of biological role, plays a central role in chromosome cohesion during mitosis and meiosis divisions by preventing premature dissociation of cohesin complex from centromeres after prophase, when most of cohesin complex dissociates from chromosomes arms. Probably act by protecting REC8 and RAD21 from separase degradation during anaphase. Also acts as a spindle checkpoint component required for sensing tension between sister chromatids during mitosis, its degradation when they separate preventing cell cycle arrest and chromosome loss in anaphase, a time when sister chromatids are no longer under tension. This Saccharomyces cerevisiae (strain ATCC 204508 / S288c) (Baker's yeast) protein is Shugoshin (SGO1).